The sequence spans 81 residues: Putative membrane protein insertion efficiency factor (81 aa).

Belongs to the UPF0161 family.

It is found in the cell inner membrane. Its function is as follows. Could be involved in insertion of integral membrane proteins into the membrane. The protein is Putative membrane protein insertion efficiency factor of Legionella pneumophila subsp. pneumophila (strain Philadelphia 1 / ATCC 33152 / DSM 7513).